A 938-amino-acid polypeptide reads, in one-letter code: Chaperone protein ClpD1, chloroplastic (938 aa).

Residues 1–83 (MEVCCCSTSS…FERFTERAVK (83 aa)) constitute a chloroplast transit peptide. 2 repeat regions span residues 84 to 145 (AVVL…TPGA) and 159 to 224 (FSGS…LQAE). The Clp R domain maps to 84–224 (AVVLSQREAK…SVALTRLQAE (141 aa)). The disordered stretch occupies residues 234–255 (GASSFKVPKKSPAGAGRSAFSK). The i stretch occupies residues 266 to 519 (LDQFCLDLTT…RMESFNRKKE (254 aa)). ATP is bound by residues 311–318 (GEAGVGKT) and 660–667 (GPTGVGKT). Residues 586–777 (VGTEEIARVA…LIVMTSNIGS (192 aa)) are II.

It belongs to the ClpA/ClpB family. ClpD subfamily. In terms of tissue distribution, expressed in stems, culms and leaves.

Its subcellular location is the plastid. The protein resides in the chloroplast. In terms of biological role, molecular chaperone that may function in heat stress response. May interact with a ClpP-like protease involved in degradation of denatured proteins in the chloroplast. Chaperone involved in response to abiotic stresses. Plays a positive role during dehydration and salt stress. In Oryza sativa subsp. japonica (Rice), this protein is Chaperone protein ClpD1, chloroplastic.